Consider the following 211-residue polypeptide: Cytochrome c biogenesis ATP-binding export protein CcmA (211 aa).

The region spanning Met-1–Gly-211 is the ABC transporter domain. Gly-33–Thr-40 contributes to the ATP binding site.

It belongs to the ABC transporter superfamily. CcmA exporter (TC 3.A.1.107) family. As to quaternary structure, the complex is composed of two ATP-binding proteins (CcmA) and two transmembrane proteins (CcmB).

The protein resides in the cell inner membrane. It carries out the reaction heme b(in) + ATP + H2O = heme b(out) + ADP + phosphate + H(+). Part of the ABC transporter complex CcmAB involved in the biogenesis of c-type cytochromes; once thought to export heme, this seems not to be the case, but its exact role is uncertain. Responsible for energy coupling to the transport system. This is Cytochrome c biogenesis ATP-binding export protein CcmA from Sodalis glossinidius (strain morsitans).